The sequence spans 533 residues: (E)-beta-farnesene synthase (533 aa).

Aspartate 286 and aspartate 290 together coordinate Mg(2+). Substrate-binding residues include aspartate 286, aspartate 290, arginine 427, and asparagine 430. The DDXXD motif signature appears at 286–290; it reads DDMMD. Mg(2+) is bound by residues asparagine 430 and glutamate 438.

This sequence belongs to the terpene synthase family. As to quaternary structure, monomer. Mg(2+) serves as cofactor. Mn(2+) is required as a cofactor.

It localises to the cytoplasm. It carries out the reaction (2E,6E)-farnesyl diphosphate = (E)-beta-farnesene + diphosphate. The catalysed reaction is (2E,6E)-farnesyl diphosphate = alpha-copaene + diphosphate. It catalyses the reaction (2E,6E)-farnesyl diphosphate = (1S,5S,6R)-alpha-bergamotene + diphosphate. The enzyme catalyses (2E,6E)-farnesyl diphosphate = (-)-(E)-beta-caryophyllene + diphosphate. It carries out the reaction (2E,6E)-farnesyl diphosphate = delta-cadinene + diphosphate. The catalysed reaction is (2E,6E)-farnesyl diphosphate = (+)-germacrene D + diphosphate. It catalyses the reaction (2E,6E)-farnesyl diphosphate = alpha-zingiberene + diphosphate. The enzyme catalyses (2E,6E)-farnesyl diphosphate = alpha-muurolene + diphosphate. It carries out the reaction (2E,6E)-farnesyl diphosphate = (S)-beta-bisabolene + diphosphate. The catalysed reaction is (2E,6E)-farnesyl diphosphate = beta-sesquiphellandrene + diphosphate. It catalyses the reaction (2E,6E)-farnesyl diphosphate = sesquisabinene A + diphosphate. Its pathway is secondary metabolite biosynthesis; terpenoid biosynthesis. Sesquiterpene cyclase catalyzing mainly the production of beta-farnesene and alpha-bergamotene in equal amounts from farnesyl diphosphate. Also mediates the biosynthesis of minor sesquiterpene hydrocarbons including alpha-muurolene, beta-bisabolene, zingiberene, sesquiphellandrene, sesquisabinene A, germacrene D, delta-cadinene, alpha-copaene and (E)-beta-caryophyllene. Involved in indirect defense by producing volatile signals attracting natural enemies of herbivores. This Zea mays (Maize) protein is (E)-beta-farnesene synthase.